Here is a 273-residue protein sequence, read N- to C-terminus: Dermonecrotic toxin LspiSicTox-betaIE1ii (273 aa).

H5 is a catalytic residue. Mg(2+) is bound by residues E25 and D27. H41 (nucleophile) is an active-site residue. 2 disulfides stabilise this stretch: C45-C51 and C47-C189. Mg(2+) is bound at residue D85.

The protein belongs to the arthropod phospholipase D family. Class II subfamily. It depends on Mg(2+) as a cofactor. In terms of tissue distribution, expressed by the venom gland.

It localises to the secreted. It carries out the reaction an N-(acyl)-sphingosylphosphocholine = an N-(acyl)-sphingosyl-1,3-cyclic phosphate + choline. The catalysed reaction is an N-(acyl)-sphingosylphosphoethanolamine = an N-(acyl)-sphingosyl-1,3-cyclic phosphate + ethanolamine. It catalyses the reaction a 1-acyl-sn-glycero-3-phosphocholine = a 1-acyl-sn-glycero-2,3-cyclic phosphate + choline. The enzyme catalyses a 1-acyl-sn-glycero-3-phosphoethanolamine = a 1-acyl-sn-glycero-2,3-cyclic phosphate + ethanolamine. Dermonecrotic toxins cleave the phosphodiester linkage between the phosphate and headgroup of certain phospholipids (sphingolipid and lysolipid substrates), forming an alcohol (often choline) and a cyclic phosphate. This toxin acts on sphingomyelin (SM). It may also act on ceramide phosphoethanolamine (CPE), lysophosphatidylcholine (LPC) and lysophosphatidylethanolamine (LPE), but not on lysophosphatidylserine (LPS), and lysophosphatidylglycerol (LPG). It acts by transphosphatidylation, releasing exclusively cyclic phosphate products as second products. Induces dermonecrosis, hemolysis, increased vascular permeability, edema, inflammatory response, and platelet aggregation. The polypeptide is Dermonecrotic toxin LspiSicTox-betaIE1ii (Loxosceles spinulosa (Recluse spider)).